The chain runs to 172 residues: Ubiquitin-conjugating enzyme E2 PEX4 (172 aa).

Residues 14 to 167 enclose the UBC core domain; that stretch reads SASKRLIKEL…VELWCQDSDS (154 aa). Cysteine 104 serves as the catalytic Glycyl thioester intermediate.

The protein belongs to the ubiquitin-conjugating enzyme family.

It catalyses the reaction S-ubiquitinyl-[E1 ubiquitin-activating enzyme]-L-cysteine + [E2 ubiquitin-conjugating enzyme]-L-cysteine = [E1 ubiquitin-activating enzyme]-L-cysteine + S-ubiquitinyl-[E2 ubiquitin-conjugating enzyme]-L-cysteine.. It functions in the pathway protein modification; protein ubiquitination. Ubiquitin-conjugating enzyme E2 that is essential for peroxisome biogenesis and plays a key role in development, pathogenicity, and cell wall integrity. Required for long and very long-chain fatty acid utilization and is involved in lipid droplet accumulation and the elimination of reactive oxygen species. Controls the expression of proteins involved in protein biosynthesis, fatty acid metabolism, cell wall synthesis, oxidation-reduction reactions, as well as of the enzymes involved in the biosynthesis of the mycotoxin deoxynivalenol (DON), including TRI5, TRI6, and TRI10. This chain is Ubiquitin-conjugating enzyme E2 PEX4, found in Gibberella zeae (strain ATCC MYA-4620 / CBS 123657 / FGSC 9075 / NRRL 31084 / PH-1) (Wheat head blight fungus).